A 198-amino-acid polypeptide reads, in one-letter code: Small ribosomal subunit protein uS4z (198 aa).

Ser68 bears the Phosphoserine mark. The S4 RNA-binding domain maps to 109–180 (RRLQTIVFKS…PGRVKRRNEK (72 aa)). Residues 163–198 (TSPFGGGRPGRVKRRNEKSASKKASGGGDADGDDEE) form a disordered region.

The protein belongs to the universal ribosomal protein uS4 family. In terms of assembly, binds to the translation initiation factors TIF3E1.

The polypeptide is Small ribosomal subunit protein uS4z (RPS9B) (Arabidopsis thaliana (Mouse-ear cress)).